A 132-amino-acid polypeptide reads, in one-letter code: Small ribosomal subunit protein uS8 (132 aa).

Belongs to the universal ribosomal protein uS8 family. Part of the 30S ribosomal subunit. Contacts proteins S5 and S12.

In terms of biological role, one of the primary rRNA binding proteins, it binds directly to 16S rRNA central domain where it helps coordinate assembly of the platform of the 30S subunit. The protein is Small ribosomal subunit protein uS8 of Rhodospirillum centenum (strain ATCC 51521 / SW).